Reading from the N-terminus, the 1581-residue chain is Calmodulin-regulated spectrin-associated protein 1 (1581 aa).

One can recognise a Calponin-homology (CH) domain in the interval 215-330 (ESPAHQKVRY…FIAELFWWFE (116 aa)). 4 positions are modified to phosphoserine: serine 216, serine 370, serine 374, and serine 415. Residues 351-399 (VLQQKSSRPPVPISNATKRSFLGSPAAMSPADQPPSTQPLAEGSHRYHL) form a disordered region. The segment at 424-470 (RQKQQKVSQTEEIPDQRHRSNSLTRVDGQPRGAIGAWPDKKNRPVSQ) is disordered. At threonine 511 the chain carries Phosphothreonine. Serine 550, serine 553, serine 560, serine 572, and serine 586 each carry phosphoserine. Over residues 603–617 (KQITTKEDERGEGRP) the composition is skewed to basic and acidic residues. Positions 603–649 (KQITTKEDERGEGRPRTIMAKRPSEGSQPMVRKKVSGGHGSRDLNRT) are disordered. Phosphoserine occurs at positions 626, 718, 724, 734, and 736. Residues 765–785 (ESAKLQEDMKVKEHEDKDDAS) show a composition bias toward basic and acidic residues. Disordered stretches follow at residues 765-803 (ESAK…SMSM) and 821-866 (LNSC…SKDP). Composition is skewed to low complexity over residues 792 to 803 (LSTTSQLSSMSM) and 826 to 837 (TKSSTSSSQKTT). The span at 853–865 (QKREQSPGRHSKD) shows a compositional bias: basic and acidic residues. Residues 867–888 (ASLLASELVQLHMQLEEKRRAI) form a sufficient for interaction with SPTBN1 region. Coiled coils occupy residues 869-905 (LLAS…QRLK) and 1005-1037 (DVNE…QEQL). The segment at 899-918 (SARQRLKLGKAAFLHVVKKG) is sufficient for interaction with calmodulin. 4 disordered regions span residues 1064–1143 (FVEP…ELPE), 1225–1251 (PDED…PGVG), 1288–1315 (QLEA…EEEK), and 1332–1428 (QALE…DWET). Serine 1069 bears the Phosphoserine mark. Basic and acidic residues predominate over residues 1092–1103 (RPAELKVPKDRQ). The segment covering 1104–1132 (QGCSRSKTPTPSVETLPQSRSLPPSTHPR) has biased composition (polar residues). Phosphoserine is present on serine 1133. Basic and acidic residues predominate over residues 1225 to 1237 (PDEDGEVVGHESS). The stretch at 1265–1336 (AKKRAAFLLK…RRKQQQALEE (72 aa)) forms a coiled coil. The segment covering 1342-1353 (PKSKPKKPRPKS) has biased composition (basic residues). A compositionally biased stretch (polar residues) spans 1361 to 1372 (SDSGTKCSSTHN). Residues 1373–1390 (LSQTHSGSSLSLASAATT) show a composition bias toward low complexity. Phosphoserine is present on residues serine 1378 and serine 1407. The CKK domain occupies 1443 to 1576 (GPKLFKEPSS…QPKRPTVPKK (134 aa)). Tyrosine 1516 is modified (phosphotyrosine).

It belongs to the CAMSAP1 family. As to quaternary structure, interacts with spectrin via SPTBN1; the interaction is direct. Interacts with calmodulin; calcium-dependent it prevents interaction with spectrin. Expressed in the central nervous system.

The protein resides in the cytoplasm. The protein localises to the cytoskeleton. Key microtubule-organizing protein that specifically binds the minus-end of non-centrosomal microtubules and regulates their dynamics and organization. Specifically recognizes growing microtubule minus-ends and stabilizes microtubules. Acts on free microtubule minus-ends that are not capped by microtubule-nucleating proteins or other factors and protects microtubule minus-ends from depolymerization. In contrast to CAMSAP2 and CAMSAP3, tracks along the growing tips of minus-end microtubules without significantly affecting the polymerization rate: binds at the very tip of the microtubules minus-end and acts as a minus-end tracking protein (-TIP) that dissociates from microtubules after allowing tubulin incorporation. Through interaction with spectrin may regulate neurite outgrowth. The polypeptide is Calmodulin-regulated spectrin-associated protein 1 (Camsap1) (Mus musculus (Mouse)).